Consider the following 1659-residue polypeptide: Intersectin-2 (1659 aa).

Residues 22 to 110 enclose the EH 1 domain; sequence ERTKHDKQFD…PIMKQPPMFS (89 aa). An EF-hand 1 domain is found at 54–89; the sequence is LPAPVLAEIWALSDLNKDGKMDQQEFSIAMKLIKLK. The Ca(2+) site is built by Asp67, Asn69, Asp71, Lys73, and Glu78. 3 positions are modified to phosphoserine: Ser110, Ser211, and Ser231. Residues 220–231 are compositionally biased toward low complexity; sequence STSSTASLSGNS. The disordered stretch occupies residues 220–242; the sequence is STSSTASLSGNSPKTGTSEWAVP. In terms of domain architecture, EH 2 spans 245 to 334; sequence SRLKYRQKFN…PELVPPSFRG (90 aa). The region spanning 278–313 is the EF-hand 2 domain; the sequence is LSQTQLATIWTLADIDGDGQLKAEEFILAMHLTDMA. The segment at 335-382 is disordered; it reads GKQVDSVNGTLPSYQKTQEEEPQKKLPVTFEDKRKANYERGNMELEKR. Positions 339–350 are enriched in polar residues; the sequence is DSVNGTLPSYQK. Over residues 351-382 the composition is skewed to basic and acidic residues; the sequence is TQEEEPQKKLPVTFEDKRKANYERGNMELEKR. The stretch at 365–717 forms a coiled coil; the sequence is EDKRKANYER…KAEAKQSETA (353 aa). Position 554 is a phosphotyrosine (Tyr554). Position 574 is a phosphothreonine (Thr574). Residues 689–713 show a composition bias toward basic and acidic residues; that stretch reads KQKRLQEEKSQDKTQEEERKAEAKQ. The segment at 689–715 is disordered; sequence KQKRLQEEKSQDKTQEEERKAEAKQSE. In terms of domain architecture, SH3 1 spans 718–779; that stretch reads SALVNYRALY…PCNYVEKVLS (62 aa). At Thr836 the chain carries Phosphothreonine. 2 positions are modified to phosphoserine: Ser838 and Ser843. The SH3 2 domain occupies 852-910; that stretch reads VENLKAQALCSWTAKKENHLNFSKHDVITVLEQQENWWFGEVHGGRGWFPKSYVKLIPG. Residue Tyr922 is modified to Phosphotyrosine. 3 consecutive SH3 domains span residues 942–1000, 1014–1078, and 1088–1147; these read PVGE…PKDQ, KKPE…LLGP, and HAVC…MTTD. Residues 1170–1357 enclose the DH domain; the sequence is KRQGYIHELI…EELCSQVNEG (188 aa). In terms of domain architecture, PH spans 1396 to 1506; the sequence is KLLHSGKLYK…WVQKIKGASE (111 aa). The C2 domain occupies 1514–1630; the sequence is KKREKAYQAR…RTEQESKGPT (117 aa). 3 residues coordinate Ca(2+): Asp1602, Ser1605, and Asp1608.

In terms of assembly, belongs to a complex that may contain multimers of ITSN1, ITSN2 and EPS15, and different partners according to the step in the endocytic process. Interacts with ADAM15. Interacts with FASLG. Interacts with ANKRD54. Interacts with FCHO2. It depends on Ca(2+) as a cofactor. Widely expressed in adult tissues.

Its subcellular location is the cytoplasm. In terms of biological role, adapter protein that may provide indirect link between the endocytic membrane traffic and the actin assembly machinery. May regulate the formation of clathrin-coated vesicles (CCPs). Seems to be involved in CCPs maturation including invagination or budding. Involved in endocytosis of integrin beta-1 (ITGB1) and transferrin receptor (TFR). Plays a role in dendrite formation by melanocytes. The sequence is that of Intersectin-2 (Itsn2) from Mus musculus (Mouse).